Reading from the N-terminus, the 235-residue chain is Small heat shock protein, chloroplastic (235 aa).

Disordered regions lie at residues 1 to 23 (MAYT…TSKI) and 51 to 80 (TGDN…ERRP). The segment covering 52–63 (GDNKDTSVDVHH) has biased composition (basic and acidic residues). Polar residues predominate over residues 64–74 (SSAQGGNNQGT). Residues 126 to 235 (SGTGEIRTPW…EKKVIDVQIN (110 aa)) enclose the sHSP domain.

Belongs to the small heat shock protein (HSP20) family. As to expression, in fruits, flowers, leaves, and stems.

It is found in the plastid. The protein localises to the chloroplast. The sequence is that of Small heat shock protein, chloroplastic (HSP21) from Solanum lycopersicum (Tomato).